The chain runs to 916 residues: Translation initiation factor IF-2 (916 aa).

The segment covering 151–191 has biased composition (basic and acidic residues); sequence NLDEQQRLAESDRARDEAIQRKRDEEQAAKDRVEAERKAAE. 2 disordered regions span residues 151-262 and 280-328; these read NLDE…SHVM and HLSA…ERPT. Composition is skewed to low complexity over residues 192-243 and 293-305; these read EAAA…ATPA and RGKP…SSSS. The region spanning 415-584 is the tr-type G domain; that stretch reads SRPPVVTIMG…SLQAEVLELK (170 aa). The tract at residues 424 to 431 is G1; sequence GHVDHGKT. 424-431 serves as a coordination point for GTP; the sequence is GHVDHGKT. Residues 449-453 form a G2 region; sequence GITQH. The interval 470 to 473 is G3; the sequence is DTPG. GTP contacts are provided by residues 470–474 and 524–527; these read DTPGH and NKID. The interval 524-527 is G4; that stretch reads NKID. The tract at residues 560–562 is G5; the sequence is SAK.

It belongs to the TRAFAC class translation factor GTPase superfamily. Classic translation factor GTPase family. IF-2 subfamily.

It is found in the cytoplasm. Its function is as follows. One of the essential components for the initiation of protein synthesis. Protects formylmethionyl-tRNA from spontaneous hydrolysis and promotes its binding to the 30S ribosomal subunits. Also involved in the hydrolysis of GTP during the formation of the 70S ribosomal complex. The polypeptide is Translation initiation factor IF-2 (Xanthomonas campestris pv. campestris (strain B100)).